The primary structure comprises 432 residues: Monoacylglycerol lipase ABHD2 (432 aa).

Over 1–14 the chain is Cytoplasmic; that stretch reads MNTHESEVYTVAPE. Residues 15-35 traverse the membrane as a helical; Signal-anchor for type II membrane protein segment; it reads MPAMFDGMKLAAVATVLYVIV. The Extracellular portion of the chain corresponds to 36–432; that stretch reads RCLNLKSPTA…NQTTCQENTS (397 aa). The AB hydrolase-1 domain occupies 132 to 383; that stretch reads TMVICPGIGN…HGGHLGFFEG (252 aa). Asn-141 carries an N-linked (GlcNAc...) asparagine glycan. The active-site Nucleophile is the Ser-212. Asn-225 is a glycosylation site (N-linked (GlcNAc...) asparagine). Active-site charge relay system residues include Asp-346 and His-377. The disordered stretch occupies residues 413–432; that stretch reads PPCQSKDAQSNQTTCQENTS. Residues 418 to 432 are compositionally biased toward polar residues; the sequence is KDAQSNQTTCQENTS. N-linked (GlcNAc...) asparagine glycosylation is present at Asn-423.

It belongs to the AB hydrolase superfamily. AB hydrolase 4 family.

Its subcellular location is the cell membrane. The enzyme catalyses Hydrolyzes glycerol monoesters of long-chain fatty acids.. It catalyses the reaction an acetyl ester + H2O = an aliphatic alcohol + acetate + H(+). The catalysed reaction is a triacylglycerol + H2O = a diacylglycerol + a fatty acid + H(+). It carries out the reaction 2-(5Z,8Z,11Z,14Z-eicosatetraenoyl)-glycerol + H2O = glycerol + (5Z,8Z,11Z,14Z)-eicosatetraenoate + H(+). The enzyme catalyses a butanoate ester + H2O = an aliphatic alcohol + butanoate + H(+). It catalyses the reaction hexadecanoate ester + H2O = an aliphatic alcohol + hexadecanoate + H(+). Acylglycerol lipase activity is activated upon binding to progesterone. In terms of biological role, progesterone-dependent acylglycerol lipase that catalyzes hydrolysis of endocannabinoid arachidonoylglycerol (AG) from cell membrane. Acts as a progesterone receptor: progesterone-binding activates the acylglycerol lipase activity, mediating degradation of 1-arachidonoylglycerol (1AG) and 2-arachidonoylglycerol (2AG) to glycerol and arachidonic acid (AA). Also displays an ester hydrolase activity against acetyl ester, butanoate ester and hexadecanoate ester. Plays a key role in sperm capacitation in response to progesterone by mediating degradation of 2AG, an inhibitor of the sperm calcium channel CatSper, leading to calcium influx via CatSper and sperm activation. May also play a role in smooth muscle cells migration. The sequence is that of Monoacylglycerol lipase ABHD2 (abhd2a) from Danio rerio (Zebrafish).